Consider the following 308-residue polypeptide: ATP synthase gamma chain (308 aa).

The protein belongs to the ATPase gamma chain family. In terms of assembly, F-type ATPases have 2 components, CF(1) - the catalytic core - and CF(0) - the membrane proton channel. CF(1) has five subunits: alpha(3), beta(3), gamma(1), delta(1), epsilon(1). CF(0) has three main subunits: a, b and c.

Its subcellular location is the cell membrane. Functionally, produces ATP from ADP in the presence of a proton gradient across the membrane. The gamma chain is believed to be important in regulating ATPase activity and the flow of protons through the CF(0) complex. The sequence is that of ATP synthase gamma chain from Lacticaseibacillus casei (strain BL23) (Lactobacillus casei).